The chain runs to 255 residues: 4-diphosphocytidyl-2-C-methyl-D-erythritol kinase (255 aa).

Lys-6 is an active-site residue. 95–105 (PVCAGLGGGSS) serves as a coordination point for ATP. Asp-137 is a catalytic residue.

It belongs to the GHMP kinase family. IspE subfamily.

It carries out the reaction 4-CDP-2-C-methyl-D-erythritol + ATP = 4-CDP-2-C-methyl-D-erythritol 2-phosphate + ADP + H(+). The protein operates within isoprenoid biosynthesis; isopentenyl diphosphate biosynthesis via DXP pathway; isopentenyl diphosphate from 1-deoxy-D-xylulose 5-phosphate: step 3/6. Its function is as follows. Catalyzes the phosphorylation of the position 2 hydroxy group of 4-diphosphocytidyl-2C-methyl-D-erythritol. The polypeptide is 4-diphosphocytidyl-2-C-methyl-D-erythritol kinase (Campylobacter jejuni subsp. doylei (strain ATCC BAA-1458 / RM4099 / 269.97)).